Reading from the N-terminus, the 1067-residue chain is Glycine--tRNA ligase, chloroplastic/mitochondrial 2 (1067 aa).

Residues 1 to 50 (MAILHFSLPLIVSFLRPHASPRFFLLPRSLSQSPFLSRRRFHRTSAVSSA) constitute a chloroplast and mitochondrion transit peptide. Substrate is bound at residue Glu-513. Residues 589–596 (RNSGINIE), 619–624 (LVVPQN), 744–745 (RL), and 859–862 (GLRR) each bind ATP. 624–628 (NLLNE) contributes to the substrate binding site. Substrate is bound at residue 855–859 (NDPFG).

The protein belongs to the class-II aminoacyl-tRNA synthetase family. As to quaternary structure, homodimer.

The protein localises to the plastid. The protein resides in the chloroplast. Its subcellular location is the mitochondrion. It catalyses the reaction tRNA(Gly) + glycine + ATP = glycyl-tRNA(Gly) + AMP + diphosphate. Its function is as follows. Catalyzes the attachment of glycine to tRNA(Gly). Is also able produce diadenosine tetraphosphate (Ap4A), a universal pleiotropic signaling molecule needed for cell regulation pathways, by direct condensation of 2 ATPs. The polypeptide is Glycine--tRNA ligase, chloroplastic/mitochondrial 2 (Arabidopsis thaliana (Mouse-ear cress)).